The following is a 104-amino-acid chain: MAIVKVTDSNFDENIQSGVKLVDFWATWCGPCKMIAPVLEELAGDYDGKADILKLDVDENPSTAAKFEVMSIPTLIVFKDGEPVDKVVGFQPKENLAEVLDKHL.

One can recognise a Thioredoxin domain in the interval 2–104 (AIVKVTDSNF…NLAEVLDKHL (103 aa)). Cysteine 29 and cysteine 32 are joined by a disulfide.

It belongs to the thioredoxin family.

Component of the thioredoxin-thioredoxin reductase system. Participates in various redox reactions through the reversible oxidation of its active center dithiol to a disulfide and catalyzes dithiol-disulfide exchange reactions. This is Thioredoxin (trxA) from Staphylococcus haemolyticus (strain JCSC1435).